The following is a 267-amino-acid chain: Endonuclease NucS (267 aa).

Belongs to the NucS endonuclease family.

It localises to the cytoplasm. In terms of biological role, cleaves both 3' and 5' ssDNA extremities of branched DNA structures. This Pyrococcus furiosus (strain ATCC 43587 / DSM 3638 / JCM 8422 / Vc1) protein is Endonuclease NucS.